The primary structure comprises 232 residues: Large ribosomal subunit protein uL1 (232 aa).

It belongs to the universal ribosomal protein uL1 family. As to quaternary structure, part of the 50S ribosomal subunit.

In terms of biological role, binds directly to 23S rRNA. The L1 stalk is quite mobile in the ribosome, and is involved in E site tRNA release. Functionally, protein L1 is also a translational repressor protein, it controls the translation of the L11 operon by binding to its mRNA. The polypeptide is Large ribosomal subunit protein uL1 (Coxiella burnetii (strain CbuK_Q154) (Coxiella burnetii (strain Q154))).